Consider the following 603-residue polypeptide: Elongation factor 4 (603 aa).

Positions 7–189 constitute a tr-type G domain; it reads SRIRNFCIIA…SIVHLVPPPS (183 aa). GTP-binding positions include 19 to 24 and 136 to 139; these read DHGKST and NKID.

The protein belongs to the TRAFAC class translation factor GTPase superfamily. Classic translation factor GTPase family. LepA subfamily.

The protein resides in the cell inner membrane. The catalysed reaction is GTP + H2O = GDP + phosphate + H(+). In terms of biological role, required for accurate and efficient protein synthesis under certain stress conditions. May act as a fidelity factor of the translation reaction, by catalyzing a one-codon backward translocation of tRNAs on improperly translocated ribosomes. Back-translocation proceeds from a post-translocation (POST) complex to a pre-translocation (PRE) complex, thus giving elongation factor G a second chance to translocate the tRNAs correctly. Binds to ribosomes in a GTP-dependent manner. The chain is Elongation factor 4 from Crocosphaera subtropica (strain ATCC 51142 / BH68) (Cyanothece sp. (strain ATCC 51142)).